Here is a 123-residue protein sequence, read N- to C-terminus: Alpha-ketoglutarate dehydrogenase subunit 4, mitochondrial (123 aa).

The N-terminal 8 residues, 1–8, are a transit peptide targeting the mitochondrion; sequence MIATPIRL.

It belongs to the alpha-ketoglutarate dehydrogenase component 4 family. Component of the 2-oxoglutarate dehydrogenase complex (OGDC), also called alpha-ketoglutarate dehydrogenase (KGDH) complex. The copmplex is composed of the catalytic subunits OGDH (2-oxoglutarate dehydrogenase KGD1; also called E1 subunit), DLST (dihydrolipoamide succinyltransferase KGD2; also called E2 subunit) and DLD (dihydrolipoamide dehydrogenase LPD1; also called E3 subunit), and the assembly factor KGD4. Within OGDC, interacts (via N-terminus) with E3 subunit and (via C-terminus) with the complex core formed by E1 and E2 subunits.

It localises to the mitochondrion. Functionally, molecular adapter that is necessary to a form a stable 2-oxoglutarate dehydrogenase enzyme complex (OGDC). Required for incorporation of the E3 subunit (LPD1) into the E1-E2 core (KGD1-KGD2) of mitochondrial OGDC, and acting as a stability factor for the fully assembled complex. This Saccharomyces cerevisiae (strain ATCC 204508 / S288c) (Baker's yeast) protein is Alpha-ketoglutarate dehydrogenase subunit 4, mitochondrial.